Consider the following 228-residue polypeptide: 2-C-methyl-D-erythritol 4-phosphate cytidylyltransferase (228 aa).

The protein belongs to the IspD/TarI cytidylyltransferase family. IspD subfamily.

It carries out the reaction 2-C-methyl-D-erythritol 4-phosphate + CTP + H(+) = 4-CDP-2-C-methyl-D-erythritol + diphosphate. The protein operates within isoprenoid biosynthesis; isopentenyl diphosphate biosynthesis via DXP pathway; isopentenyl diphosphate from 1-deoxy-D-xylulose 5-phosphate: step 2/6. Functionally, catalyzes the formation of 4-diphosphocytidyl-2-C-methyl-D-erythritol from CTP and 2-C-methyl-D-erythritol 4-phosphate (MEP). The protein is 2-C-methyl-D-erythritol 4-phosphate cytidylyltransferase of Geobacillus thermodenitrificans (strain NG80-2).